A 268-amino-acid polypeptide reads, in one-letter code: Ribosomal RNA large subunit methyltransferase E (268 aa).

S-adenosyl-L-methionine is bound by residues Gly-50, Trp-52, Asp-68, Asp-84, and Asp-109. The active-site Proton acceptor is the Lys-149. The region spanning 196–254 (PLRKGDKFVVDIEKLGSSGDGAVLIEGFVVFVKEVEVGEKVRIKISDVKPNFAFADVEE) is the TRAM domain.

This sequence belongs to the class I-like SAM-binding methyltransferase superfamily. RNA methyltransferase RlmE family.

The protein resides in the cytoplasm. The enzyme catalyses uridine(2552) in 23S rRNA + S-adenosyl-L-methionine = 2'-O-methyluridine(2552) in 23S rRNA + S-adenosyl-L-homocysteine + H(+). Specifically methylates the uridine in position 2552 of 23S rRNA at the 2'-O position of the ribose in the fully assembled 50S ribosomal subunit. The sequence is that of Ribosomal RNA large subunit methyltransferase E from Methanosarcina mazei (strain ATCC BAA-159 / DSM 3647 / Goe1 / Go1 / JCM 11833 / OCM 88) (Methanosarcina frisia).